The following is a 164-amino-acid chain: 3-isopropylmalate dehydratase small subunit 1 (164 aa).

It belongs to the LeuD family. LeuD type 2 subfamily. In terms of assembly, heterodimer of LeuC and LeuD.

The catalysed reaction is (2R,3S)-3-isopropylmalate = (2S)-2-isopropylmalate. It functions in the pathway amino-acid biosynthesis; L-leucine biosynthesis; L-leucine from 3-methyl-2-oxobutanoate: step 2/4. Functionally, catalyzes the isomerization between 2-isopropylmalate and 3-isopropylmalate, via the formation of 2-isopropylmaleate. The polypeptide is 3-isopropylmalate dehydratase small subunit 1 (leuD1) (Pyrococcus abyssi (strain GE5 / Orsay)).